The sequence spans 689 residues: Histone-lysine N-methyltransferase MEDEA (689 aa).

Disordered stretches follow at residues 1–20, 51–73, and 169–188; these read MEKE…LNQI, HQSF…KSLL, and ELSS…EIKK. Residues 1–109 form an interaction with FIE region; the sequence is MEKENHEDDG…DEDQDYALEE (109 aa). Positions 171–184 are enriched in acidic residues; it reads SSEEDEEDEEEDEE. An SANT domain is found at 339-389; the sequence is NNTMWTPVEKDLYLKGIEIFGRNSCDVALNILRGLKTCLEIYNYMREQDQC. A CXC domain is found at 428 to 532; it reads RYPPALKKTT…TLGETPVQIQ (105 aa). Residues 544 to 659 enclose the SET domain; the sequence is KKILIGKSDV…EGEELFFDYC (116 aa). The segment at 666–689 is disordered; the sequence is DWSRGREPRKTGASKRSKEARPAR.

Belongs to the class V-like SAM-binding methyltransferase superfamily. Histone-lysine methyltransferase family. EZ subfamily. As to quaternary structure, interacts directly with FIE via its N-terminal domain. These two proteins are probably indirectly associated with FIS2. In plants, PcG complexes are probably composed of a member of the EZ family (CLF or MEA), FIE, and a member of the VEFS family (FIS2, VRN2 or EMF2). Interacts with TAF13. Expressed in unpollinated siliques that contain maturing gametophytes. Not expressed at early stages of floral development during early megagametogenesis.

It localises to the nucleus. It carries out the reaction L-lysyl(27)-[histone H3] + 3 S-adenosyl-L-methionine = N(6),N(6),N(6)-trimethyl-L-lysyl(27)-[histone H3] + 3 S-adenosyl-L-homocysteine + 3 H(+). In terms of biological role, polycomb group (PcG) protein. Catalytic subunit of some PcG multiprotein complex, which methylates 'Lys-27' of histone H3, leading to transcriptional repression of the affected target genes. Required to prevent the proliferation of the central cell of the female gametophyte by repressing target genes before fertilization. After fertilization, it probably also regulates the embryo and endosperm proliferation and anteroposterior organization during seed development. PcG proteins act by forming multiprotein complexes, which are required to maintain the transcriptionally repressive state of homeotic genes throughout development. PcG proteins are not required to initiate repression, but to maintain it during later stages of development. Interacts with the promoter and repress the transcription of genes such as PHE1 and PHE2, that are paternally active and maternally silenced genes. This chain is Histone-lysine N-methyltransferase MEDEA (MEA), found in Arabidopsis thaliana (Mouse-ear cress).